The chain runs to 49 residues: uncharacterized protein (49 aa).

Positions 1-22 (MVFLLFLSFVLSSIFLVPLVYM) are cleaved as a signal peptide.

The protein resides in the secreted. This is an uncharacterized protein from Dictyostelium discoideum (Social amoeba).